The following is a 268-amino-acid chain: Regulatory protein zeste (268 aa).

The DNA-binding element occupies 1–72; it reads TAEEKEVLYT…WLNSRLRKQY (72 aa). Residues 94–108 are compositionally biased toward low complexity; that stretch reads VSVASAVPQQQQQQH. The tract at residues 94-133 is disordered; the sequence is VSVASAVPQQQQQQHHQQHDNVKEEPEYQISPDASEHNPQ. A compositionally biased stretch (basic and acidic residues) spans 110-119; sequence QQHDNVKEEP.

As to quaternary structure, self-associates forming complexes of several hundred monomers.

The protein resides in the nucleus. In terms of biological role, involved in transvection phenomena (= synapsis-dependent gene expression), where the synaptic pairing of chromosomes carrying genes with which zeste interacts influences the expression of these genes. Zeste binds to DNA and stimulates transcription from a nearby promoter. This is Regulatory protein zeste (z) from Drosophila sechellia (Fruit fly).